The following is a 677-amino-acid chain: mRNA 3'-end-processing protein RNA14 (677 aa).

HAT repeat units follow at residues 56–88, 90–124, 138–170, 181–214, 257–289, and 298–330; these read ESYAKVREVYEQFHNTFPFYSPAWTLQLKGELA, DEFETVEKILAQCLSGKLENNDLSLWSTYLDYIRR, VIVKAFQLVMQKCAIFEPKSSSFWNEYLNFLEQ, QRIDMLREFYKKMLCVPFDNLEKMWNRYTQWEQE, RTANKKNIPQPGTSDSNIQQLQIWLNWIKWERE, and MLSQRISYVYKQGIQYMIFSAEMWYDYSMYISE.

Component of the CFIA complex, which is composed of RNA14, RNA15, PCF11 and CLP1. Interacts with FIP1, PFS2, YSH1 and probably also with RNA15. Probably interacts with the phosphorylated CTD domain of RPB1/RNA polymerase II.

The protein resides in the nucleus. Its subcellular location is the cytoplasm. Component of the cleavage factor IA (CFIA) complex, which is involved in the endonucleolytic cleavage during polyadenylation-dependent pre-mRNA 3'-end formation and cooperates with the cleavage factor NAB4/CFIB and the cleavage and polyadenylation factor (CPF) complex. This is mRNA 3'-end-processing protein RNA14 (RNA14) from Saccharomyces cerevisiae (strain ATCC 204508 / S288c) (Baker's yeast).